Reading from the N-terminus, the 125-residue chain is UPF0325 protein Ping_0715 (125 aa).

This sequence belongs to the UPF0325 family.

The polypeptide is UPF0325 protein Ping_0715 (Psychromonas ingrahamii (strain DSM 17664 / CCUG 51855 / 37)).